The chain runs to 572 residues: Methionine--tRNA ligase (572 aa).

A 'HIGH' region motif is present at residues 11-21 (PYINGIKHLGN). Zn(2+)-binding residues include C143, C146, C156, and C159. The short motif at 346–350 (QFSTS) is the 'KMSKS' region element. Residue T349 participates in ATP binding.

Belongs to the class-I aminoacyl-tRNA synthetase family. MetG type 1 subfamily. In terms of assembly, monomer. Requires Zn(2+) as cofactor.

It localises to the cytoplasm. It carries out the reaction tRNA(Met) + L-methionine + ATP = L-methionyl-tRNA(Met) + AMP + diphosphate. Functionally, is required not only for elongation of protein synthesis but also for the initiation of all mRNA translation through initiator tRNA(fMet) aminoacylation. The chain is Methionine--tRNA ligase from Paracoccus denitrificans (strain Pd 1222).